A 139-amino-acid chain; its full sequence is Putative pre-16S rRNA nuclease (139 aa).

This sequence belongs to the YqgF nuclease family.

The protein resides in the cytoplasm. In terms of biological role, could be a nuclease involved in processing of the 5'-end of pre-16S rRNA. The chain is Putative pre-16S rRNA nuclease from Rubrobacter xylanophilus (strain DSM 9941 / JCM 11954 / NBRC 16129 / PRD-1).